The following is a 532-amino-acid chain: Phosphoenolpyruvate carboxykinase (ATP) (532 aa).

Substrate-binding residues include R58, Y194, and K200. Residues K200, H220, and 236–244 (GLSGTGKTT) contribute to the ATP site. 2 residues coordinate Mn(2+): K200 and H220. D257 is a binding site for Mn(2+). Residues E285, R322, 442-443 (RV), and T448 contribute to the ATP site. R322 contacts substrate.

The protein belongs to the phosphoenolpyruvate carboxykinase (ATP) family. Requires Mn(2+) as cofactor.

The protein localises to the cytoplasm. The catalysed reaction is oxaloacetate + ATP = phosphoenolpyruvate + ADP + CO2. Its pathway is carbohydrate biosynthesis; gluconeogenesis. Involved in the gluconeogenesis. Catalyzes the conversion of oxaloacetate (OAA) to phosphoenolpyruvate (PEP) through direct phosphoryl transfer between the nucleoside triphosphate and OAA. The polypeptide is Phosphoenolpyruvate carboxykinase (ATP) (Rubrobacter xylanophilus (strain DSM 9941 / JCM 11954 / NBRC 16129 / PRD-1)).